A 663-amino-acid polypeptide reads, in one-letter code: LEAF RUST 10 DISEASE-RESISTANCE LOCUS RECEPTOR-LIKE PROTEIN KINASE-like 1.4 (663 aa).

An N-terminal signal peptide occupies residues M1–S25. At S26–G241 the chain is on the extracellular side. N-linked (GlcNAc...) asparagine glycans are attached at residues N36, N64, N106, N137, and N208. A helical transmembrane segment spans residues I242–I262. Residues R263–L663 are Cytoplasmic-facing. The segment at S282–S304 is disordered. Residues R290–S304 show a composition bias toward low complexity. A Protein kinase domain is found at E334 to I609. ATP contacts are provided by residues L340–V348 and K362. D458 (proton acceptor) is an active-site residue. Residues L637–L663 are disordered. Polar residues predominate over residues W653–L663.

Belongs to the protein kinase superfamily. Ser/Thr protein kinase family.

The protein localises to the cell membrane. It carries out the reaction L-seryl-[protein] + ATP = O-phospho-L-seryl-[protein] + ADP + H(+). It catalyses the reaction L-threonyl-[protein] + ATP = O-phospho-L-threonyl-[protein] + ADP + H(+). This is LEAF RUST 10 DISEASE-RESISTANCE LOCUS RECEPTOR-LIKE PROTEIN KINASE-like 1.4 from Arabidopsis thaliana (Mouse-ear cress).